Consider the following 312-residue polypeptide: Erlin (312 aa).

The Cytoplasmic portion of the chain corresponds to 1–3; the sequence is MLT. The chain crosses the membrane as a helical span at residues 4 to 24; that stretch reads ELALGLFALWIAIFSQALHKI. The Lumenal segment spans residues 25 to 312; it reads EEGHVGVYYR…FVMGTTQQTV (288 aa). Residue N104 is glycosylated (N-linked (GlcNAc...) asparagine).

Belongs to the band 7/mec-2 family. As to quaternary structure, seems to form a multimeric complex. As to expression, expressed in the germline only.

It localises to the endoplasmic reticulum membrane. This Caenorhabditis elegans protein is Erlin.